Consider the following 603-residue polypeptide: Ribosome-inactivating protein PMRIPt (603 aa).

A signal peptide spans 1–39; the sequence is MRVVAGILYIVVMAICGLGIQGGTLQDYPSVYFQDSTLQ. Asn-74 and Asn-168 each carry an N-linked (GlcNAc...) asparagine glycan. Residue Glu-208 is part of the active site. Intrachain disulfides connect Cys-297–Cys-335, Cys-351–Cys-370, and Cys-392–Cys-409. Ricin B-type lectin domains are found at residues 338–466 and 467–593; these read GEPT…VGDD and VEPI…WMTM. A 1-alpha repeat occupies 348–388; sequence DGLCMDVRNESNNDGIPIQLWPCGAQRNQQWTFHTDGTIQS. Asn-356 and Asn-408 each carry an N-linked (GlcNAc...) asparagine glycan. Residues 389–430 form a 1-beta repeat; the sequence is MGKCMTSNGYHPGDYVMIFNCSTAPVPDATKWVVSIDGSITN. One copy of the 1-gamma repeat lies at 433-466; sequence SGLVLTAPQAAQTTILLVVRNTHSAKQGRSVGDD. The stretch at 478-516 is one 2-alpha repeat; that stretch reads KYMCLQGNNENNTRVWLEDCAVDRPQQWWALYSDGTIRV. Disulfide bonds link Cys-481/Cys-497 and Cys-523/Cys-540. An N-linked (GlcNAc...) asparagine glycan is attached at Asn-488. A 2-beta repeat occupies 520–558; that stretch reads RSLCVTSDGHSSRDAIIILTCDGGINQRLVFNTDGTILN. A 2-gamma repeat occupies 561-597; the sequence is AQLVMDVRQSNVALRQIILYQPTGNPNQQWMTMITRT.

The protein belongs to the ribosome-inactivating protein family. Type 2 RIP subfamily. Tetramer of four pairs of disulfide bound A-B chains. The precursor is processed in two chains, A and B, that are linked by a disulfide bond. In terms of processing, glycosylated. As to expression, expressed in rhizome and more abundantly in leaves (at protein level).

The catalysed reaction is Endohydrolysis of the N-glycosidic bond at one specific adenosine on the 28S rRNA.. Strongly inhibited by asialofetuin and asialomucin. GalNAc-specific agglutinin. Behaves as a type-2 ribosome-inactivating protein. Inhibits mammalian ribosomes. The A chain is responsible for inhibiting protein synthesis through the catalytic inactivation of 60S ribosomal subunits by removing adenine from position 4,324 of 28S rRNA. The B chain binds to cell receptors and probably facilitates the entry into the cell of the A chain; B chains are also responsible for cell agglutination (lectin activity). Involved in plant defense against insects. Has very low cytotoxic activity against the human tumor cell lines CEM and Molt4. This chain is Ribosome-inactivating protein PMRIPt, found in Polygonatum multiflorum (Solomon's seal).